Consider the following 215-residue polypeptide: Nascent polypeptide-associated complex subunit alpha (215 aa).

Positions 1 to 81 (MPGEATETVP…SEKKARKAMS (81 aa)) are disordered. The segment covering 9–21 (VPVTEQEMQQPQV) has biased composition (polar residues). Over residues 29–42 (SDSDDSVPELEEQD) the composition is skewed to acidic residues. Positions 43 to 57 (SAQTQTQQAQLAAAA) are enriched in low complexity. The region spanning 70-135 (SRSEKKARKA…AKIEDLSQQA (66 aa)) is the NAC-A/B domain. In terms of domain architecture, UBA spans 176–213 (VEVKDIELVMSQANVSRAKAVRALKNNNNDIVNAIMEL).

Belongs to the NAC-alpha family.

In terms of biological role, may promote appropriate targeting of ribosome-nascent polypeptide complexes. The sequence is that of Nascent polypeptide-associated complex subunit alpha (naca) from Oreochromis niloticus (Nile tilapia).